The primary structure comprises 402 residues: N-acetyltransferase Eis (402 aa).

Residues 3–154 form the N-acetyltransferase domain; the sequence is VTLCSPTEDD…RFARFHADAP (152 aa). Acetyl-CoA contacts are provided by residues 85–87, 93–98, and 121–122; these read VAV, RRGLLR, and SE. The active-site Proton donor is Tyr126. Phe402 functions as the Proton acceptor; via carboxylate in the catalytic mechanism.

It belongs to the acetyltransferase Eis family. Homohexamer; trimer of dimers.

The protein resides in the secreted. It is found in the host cytoplasmic vesicle. It localises to the host phagosome. Its subcellular location is the extracellular vesicle. The protein localises to the bacterial extracellular vesicle. The protein resides in the host extracellular space. It catalyses the reaction L-lysyl-[protein] + acetyl-CoA = N(6)-acetyl-L-lysyl-[protein] + CoA + H(+). Functionally, effector that is released into the host cell and affects host immune responses. Acts as an acetyltransferase that acetylates lysine residues of host proteins. This chain is N-acetyltransferase Eis, found in Mycobacterium bovis (strain ATCC BAA-935 / AF2122/97).